Here is a 174-residue protein sequence, read N- to C-terminus: MLDRDGYRPNVGIILTNAKNEVFWGKRVREHSWQFPQGGIKPGESPEAAMYRELLEEVGLLPQHVKILGRTRDWLRYEVPTNWVRREWRGSYKGQKQIWFLLRLVGRDSDVCLRATNHPEFDGWRWNDYWAPVDAVIEFKRDVYERALSELARFMRGVESHHAYLARTSTQSEQ.

The Nudix hydrolase domain occupies 6-149 (GYRPNVGIIL…KRDVYERALS (144 aa)). The Nudix box motif lies at 38–59 (GGIKPGESPEAAMYRELLEEVG).

The protein belongs to the Nudix hydrolase family. RppH subfamily. Requires a divalent metal cation as cofactor.

Functionally, accelerates the degradation of transcripts by removing pyrophosphate from the 5'-end of triphosphorylated RNA, leading to a more labile monophosphorylated state that can stimulate subsequent ribonuclease cleavage. The chain is RNA pyrophosphohydrolase from Chromobacterium violaceum (strain ATCC 12472 / DSM 30191 / JCM 1249 / CCUG 213 / NBRC 12614 / NCIMB 9131 / NCTC 9757 / MK).